A 157-amino-acid polypeptide reads, in one-letter code: Transcription elongation factor GreA (157 aa).

Residues 14–37 (LREELDRLLKLRPKITEAIAEARE) are a coiled coil.

The protein belongs to the GreA/GreB family.

Its function is as follows. Necessary for efficient RNA polymerase transcription elongation past template-encoded arresting sites. The arresting sites in DNA have the property of trapping a certain fraction of elongating RNA polymerases that pass through, resulting in locked ternary complexes. Cleavage of the nascent transcript by cleavage factors such as GreA or GreB allows the resumption of elongation from the new 3'terminus. GreA releases sequences of 2 to 3 nucleotides. The polypeptide is Transcription elongation factor GreA (Vibrio cholerae serotype O1 (strain ATCC 39315 / El Tor Inaba N16961)).